A 628-amino-acid polypeptide reads, in one-letter code: tRNA uridine 5-carboxymethylaminomethyl modification enzyme MnmG (628 aa).

Residue 14-19 (GAGHAG) participates in FAD binding. 274–288 (GPRYCPSIEDKIVRF) is a binding site for NAD(+).

It belongs to the MnmG family. In terms of assembly, homodimer. Heterotetramer of two MnmE and two MnmG subunits. FAD serves as cofactor.

It localises to the cytoplasm. Its function is as follows. NAD-binding protein involved in the addition of a carboxymethylaminomethyl (cmnm) group at the wobble position (U34) of certain tRNAs, forming tRNA-cmnm(5)s(2)U34. The polypeptide is tRNA uridine 5-carboxymethylaminomethyl modification enzyme MnmG (Clostridium kluyveri (strain ATCC 8527 / DSM 555 / NBRC 12016 / NCIMB 10680 / K1)).